The chain runs to 385 residues: AA13 family lytic polysaccharide monooxygenase aasA (385 aa).

Positions 1–18 are cleaved as a signal peptide; sequence MKSLLALVAGNLVTAVSG. His19 contacts Cu(2+). Residue His19 is modified to Methylhistidine. The segment at 19–248 is N-terminal catalytic module; that stretch reads HGYLTVPASR…AQVYLHCADI (230 aa). Cystine bridges form between Cys40/Cys43, Cys66/Cys245, Cys102/Cys203, Cys118/Cys145, Cys153/Cys161, Cys167/Cys173, and Cys181/Cys192. His109 lines the Cu(2+) pocket. Asn120 is a glycosylation site (N-linked (GlcNAc...) asparagine). Residue Tyr242 coordinates Cu(2+). The interval 254–276 is disordered; sequence SGSSPSPTSTTSTATSTTTPSST. Over residues 256 to 276 the composition is skewed to low complexity; that stretch reads SSPSPTSTTSTATSTTTPSST. The 108-residue stretch at 278-385 folds into the CBM20 domain; that stretch reads CASAISIPVT…TTATESGAWR (108 aa). An N-linked (GlcNAc...) asparagine glycan is attached at Asn364.

It belongs to the polysaccharide monooxygenase AA13 family. Cu(2+) serves as cofactor. In terms of processing, the catalytically essential N-terminal histidine His-19 is post-translationally modified by methylation to prevent protonation of the histidine side chain, and protect the critical active site of the enzyme from oxidative damage.

It is found in the secreted. It catalyses the reaction starch + reduced acceptor + O2 = D-glucono-1,5-lactone-terminated malto-oligosaccharides + short-chain malto-oligosaccharides + acceptor + H2O.. Starch-active polysaccharide monooxygenase that oxidizes the C1 position of starch substrates, but not in cellulose, chitin, polygalacturonan or esterified pectin, nor with Arabidopsis stem cell walls. Catalysis by LPMOs requires the reduction of the active-site copper from Cu(II) to Cu(I) by a reducing agent and H(2)O(2) or O(2) as a cosubstrate. This is AA13 family lytic polysaccharide monooxygenase aasA from Emericella nidulans (strain FGSC A4 / ATCC 38163 / CBS 112.46 / NRRL 194 / M139) (Aspergillus nidulans).